The sequence spans 478 residues: Chromosomal replication initiator protein DnaA (478 aa).

A domain I, interacts with DnaA modulators region spans residues Met-1–Tyr-71. The segment at Tyr-71–Gly-136 is domain II. The tract at residues Met-137–Ala-353 is domain III, AAA+ region. The ATP site is built by Gly-181, Gly-183, Lys-184, and Thr-185. Residues Glu-354 to Leu-478 form a domain IV, binds dsDNA region.

The protein belongs to the DnaA family. As to quaternary structure, oligomerizes as a right-handed, spiral filament on DNA at oriC.

It localises to the cytoplasm. Its function is as follows. Plays an essential role in the initiation and regulation of chromosomal replication. ATP-DnaA binds to the origin of replication (oriC) to initiate formation of the DNA replication initiation complex once per cell cycle. Binds the DnaA box (a 9 base pair repeat at the origin) and separates the double-stranded (ds)DNA. Forms a right-handed helical filament on oriC DNA; dsDNA binds to the exterior of the filament while single-stranded (ss)DNA is stabiized in the filament's interior. The ATP-DnaA-oriC complex binds and stabilizes one strand of the AT-rich DNA unwinding element (DUE), permitting loading of DNA polymerase. After initiation quickly degrades to an ADP-DnaA complex that is not apt for DNA replication. Binds acidic phospholipids. This chain is Chromosomal replication initiator protein DnaA, found in Chloroflexus aggregans (strain MD-66 / DSM 9485).